Reading from the N-terminus, the 71-residue chain is Large ribosomal subunit protein uL29 (71 aa).

Positions 1-20 are disordered; it reads MKARELQELRQGSSPQDLQE.

Belongs to the universal ribosomal protein uL29 family.

The protein is Large ribosomal subunit protein uL29 of Clostridium kluyveri (strain ATCC 8527 / DSM 555 / NBRC 12016 / NCIMB 10680 / K1).